We begin with the raw amino-acid sequence, 386 residues long: MEEPGARCAPPPPAGSQTQTPSSNLSHNCSADSYIYQDSIALPWKVLLVALLALITLATTLSNAFVIATVYRTRKLHTPANYLIASLAVTDLLVSILVMPISTMYTVTGRWTLGQVVCDFWLSSDITCCTASIMHLCVIALDRYWAITDAVEYSAKRTPRRAAVMIALVWVFSISISLPRFFWRQAKAEEEVLDCLVNTDHVLYTVYSTVGAFYLPTLLLIALYGRIYVEARSRILKQTPNKTGKRLSRAQLISDSPGSTSSVTSINSRVPDVPSESGSPVYVNQVKVRVSDALLEKKKLMAARERKATKTLGIILGAFIVCWLPFFIISLVMPICKDACWFHMAIFDFFNWLGYLNSLINPIIYTMPNEDFKQAFHKLIRFKCTG.

The segment at 1 to 25 is disordered; that stretch reads MEEPGARCAPPPPAGSQTQTPSSNL. Residues 1–42 are Extracellular-facing; the sequence is MEEPGARCAPPPPAGSQTQTPSSNLSHNCSADSYIYQDSIAL. Positions 16 to 25 are enriched in polar residues; sequence SQTQTPSSNL. Residues Asn-24 and Asn-28 are each glycosylated (N-linked (GlcNAc...) asparagine). Residues 43-68 traverse the membrane as a helical segment; the sequence is PWKVLLVALLALITLATTLSNAFVIA. At 69 to 82 the chain is on the cytoplasmic side; the sequence is TVYRTRKLHTPANY. The chain crosses the membrane as a helical span at residues 83–107; sequence LIASLAVTDLLVSILVMPISTMYTV. Residues 108–115 are Extracellular-facing; the sequence is TGRWTLGQ. Residues 116–141 traverse the membrane as a helical segment; it reads VVCDFWLSSDITCCTASIMHLCVIAL. A disulfide bond links Cys-118 and Cys-195. Ergotamine-binding residues include Asp-125 and Thr-130. A DRY motif; important for ligand-induced conformation changes and signaling motif is present at residues 142 to 144; it reads DRY. Topologically, residues 142 to 161 are cytoplasmic; sequence DRYWAITDAVEYSAKRTPRR. A helical transmembrane segment spans residues 162–180; sequence AAVMIALVWVFSISISLPR. The Extracellular segment spans residues 181-201; it reads FFWRQAKAEEEVLDCLVNTDH. Residue Val-197 participates in ergotamine binding. Residues 202–225 traverse the membrane as a helical segment; it reads VLYTVYSTVGAFYLPTLLLIALYG. Over 226–311 the chain is Cytoplasmic; it reads RIYVEARSRI…AARERKATKT (86 aa). Residues 253 to 272 form a disordered region; sequence ISDSPGSTSSVTSINSRVPD. Residues 254–268 show a composition bias toward low complexity; sequence SDSPGSTSSVTSINS. The chain crosses the membrane as a helical span at residues 312 to 333; the sequence is LGIILGAFIVCWLPFFIISLVM. At 334–343 the chain is on the extracellular side; that stretch reads PICKDACWFH. The chain crosses the membrane as a helical span at residues 344-366; the sequence is MAIFDFFNWLGYLNSLINPIIYT. The short motif at 361-365 is the NPxxY motif; important for ligand-induced conformation changes and signaling element; it reads NPIIY. Over 367–386 the chain is Cytoplasmic; it reads MPNEDFKQAFHKLIRFKCTG. A lipid anchor (S-palmitoyl cysteine) is attached at Cys-384.

It belongs to the G-protein coupled receptor 1 family. As to quaternary structure, homodimer. Heterodimer with HTR1D. Post-translationally, phosphorylated. Desensitization of the receptor may be mediated by its phosphorylation. Palmitoylated.

The protein resides in the cell membrane. G-protein coupled receptor for 5-hydroxytryptamine (serotonin). Also functions as a receptor for ergot alkaloid derivatives, various anxiolytic and antidepressant drugs and other psychoactive substances, such as lysergic acid diethylamide (LSD). Ligand binding causes a conformation change that triggers signaling via guanine nucleotide-binding proteins (G proteins) and modulates the activity of downstream effectors, such as adenylate cyclase. HTR1B is coupled to G(i)/G(o) G alpha proteins and mediates inhibitory neurotransmission by inhibiting adenylate cyclase activity. Arrestin family members inhibit signaling via G proteins and mediate activation of alternative signaling pathways. Regulates the release of 5-hydroxytryptamine, dopamine and acetylcholine in the brain, and thereby affects neural activity, nociceptive processing, pain perception, mood and behavior. Besides, plays a role in vasoconstriction of cerebral arteries. The protein is 5-hydroxytryptamine receptor 1B (HTR1B) of Spalax ehrenbergi (Middle East blind mole rat).